The chain runs to 155 residues: Transcriptional repressor NrdR (155 aa).

The segment at 3 to 34 is a zinc-finger region; that stretch reads CPFCGHSNTQVLDTRMSEDGDAVRRRRRCEAC. An ATP-cone domain is found at 49–139; that stretch reads PAIVKKNGSR…VYRSFEDVSE (91 aa).

The protein belongs to the NrdR family. The cofactor is Zn(2+).

In terms of biological role, negatively regulates transcription of bacterial ribonucleotide reductase nrd genes and operons by binding to NrdR-boxes. The polypeptide is Transcriptional repressor NrdR (Cupriavidus necator (strain ATCC 17699 / DSM 428 / KCTC 22496 / NCIMB 10442 / H16 / Stanier 337) (Ralstonia eutropha)).